The following is a 691-amino-acid chain: Solute carrier organic anion transporter family member 1B1 (691 aa).

The Cytoplasmic portion of the chain corresponds to 1–28 (MDQNQHLNKTAEAQPSENKKTRYCNGLK). Residues 29 to 48 (MFLAALSLSFIAKTLGAIIM) traverse the membrane as a helical segment. The Extracellular segment spans residues 49-67 (KSSIIHIERRFEISSSLVG). Residues 68-88 (FIDGSFEIGNLLVIVFVSYFG) traverse the membrane as a helical segment. Residues 89–94 (SKLHRP) are Cytoplasmic-facing. The helical transmembrane segment at 95 to 119 (KLIGIGCFIMGIGGVLTALPHFFMG) threads the bilayer. Residues 120-168 (YYRYSKETNINSSENSTSTLSTCLINQILSLNRASPEIVGKGCLKESGS) lie on the Extracellular side of the membrane. 2 N-linked (GlcNAc...) asparagine glycosylation sites follow: Asn-130 and Asn-134. Residues 169–197 (YMWIYVFMGNMLRGIGETPIVPLGLSYID) traverse the membrane as a helical segment. The Cytoplasmic portion of the chain corresponds to 198–216 (DFAKEGHSSLYLGILNAIA). The chain crosses the membrane as a helical span at residues 217–237 (MIGPIIGFTLGSLFSKMYVDI). Over 238–255 (GYVDLSTIRITPTDSRWV) the chain is Extracellular. Residues 256–280 (GAWWLNFLVSGLFSIISSIPFFFLP) form a helical membrane-spanning segment. Residues 281–331 (QTPNKPQKERKASLSLHVLETNDEKDQTANLTNQGKNITKNVTGFFQSFKS) are Cytoplasmic-facing. 2 positions are modified to phosphoserine: Ser-293 and Ser-295. Residues 332–353 (ILTNPLYVMFVLLTLLQVSSYI) traverse the membrane as a helical segment. Over 354-373 (GAFTYVFKYVEQQYGQPSSK) the chain is Extracellular. The helical transmembrane segment at 374–397 (ANILLGVITIPIFASGMFLGGYII) threads the bilayer. Topologically, residues 398–401 (KKFK) are cytoplasmic. Residues 402–425 (LNTVGIAKFSCFTAVMSLSFYLLY) form a helical membrane-spanning segment. The Extracellular portion of the chain corresponds to 426-537 (FFILCENKSV…DACTRKFYFF (112 aa)). N-linked (GlcNAc...) asparagine glycosylation occurs at Asn-432. In terms of domain architecture, Kazal-like spans 453–508 (DVPLSYCNSDCNCDESQWEPVCGNNGITYISPCLAGCKSSSGNKKPIVFYNCSCLE). 3 disulfide bridges follow: Cys-459–Cys-489, Cys-465–Cys-485, and Cys-474–Cys-506. Asn-503 and Asn-516 each carry an N-linked (GlcNAc...) asparagine glycan. Residues 538-560 (VAIQVLNLFFSALGGTSHVMLIV) traverse the membrane as a helical segment. Residues 561–569 (KIVQPELKS) are Cytoplasmic-facing. The helical transmembrane segment at 570–595 (LALGFHSMVIRALGGILAPIYFGALI) threads the bilayer. The Extracellular portion of the chain corresponds to 596-629 (DTTCIKWSTNNCGTRGSCRTYNSTSFSRVYLGLS). Asn-617 is a glycosylation site (N-linked (GlcNAc...) asparagine). Residues 630–647 (SMLRVSSLVLYIILIYAM) traverse the membrane as a helical segment. The Cytoplasmic segment spans residues 648–691 (KKKYQEKDINASENGSVMDEANLESLNKNKHFVPSAGADSETHC). Residues Ser-672 and Ser-682 each carry the phosphoserine modification.

Belongs to the organo anion transporter (TC 2.A.60) family. As to expression, highly expressed in liver, at the basolateral membranes of centrilobular hepatocytes. Expressed in liver (at protein level). Expressed in fetal liver. Not detected in heart, brain, placenta, lung, skeletal muscle, kidney, pancreas, spleen, thymus, prostate, testis, ovary, small intestine, colon and leukocyte. In testis, primarily localized to the basal membrane of Sertoli cells and weakly expressed in Leydig cells and within the tubules.

Its subcellular location is the basolateral cell membrane. The protein localises to the basal cell membrane. The enzyme catalyses taurocholate(out) = taurocholate(in). It catalyses the reaction dehydroepiandrosterone 3-sulfate(out) = dehydroepiandrosterone 3-sulfate(in). The catalysed reaction is estrone 3-sulfate(out) = estrone 3-sulfate(in). It carries out the reaction 3,3',5'-triiodo-L-thyronine(out) = 3,3',5'-triiodo-L-thyronine(in). The enzyme catalyses L-thyroxine(out) = L-thyroxine(in). It catalyses the reaction prostaglandin E2(out) = prostaglandin E2(in). The catalysed reaction is thromboxane B2(out) = thromboxane B2(in). It carries out the reaction 17beta-estradiol 17-O-(beta-D-glucuronate)(out) = 17beta-estradiol 17-O-(beta-D-glucuronate)(in). The enzyme catalyses leukotriene C4(out) = leukotriene C4(in). It catalyses the reaction leukotriene E4(out) = leukotriene E4(in). The catalysed reaction is (4E,15E)-bilirubin IXalpha C8-beta-D-glucuronoside(out) = (4E,15E)-bilirubin IXalpha C8-beta-D-glucuronoside(in). It carries out the reaction bilirubin IXalpha bis-beta-D-glucuronoside(out) = bilirubin IXalpha bis-beta-D-glucuronoside(in). Its function is as follows. Mediates the Na(+)-independent uptake of organic anions. Shows broad substrate specificity, can transport both organic anions such as bile acid taurocholate (cholyltaurine) and conjugated steroids (dehydroepiandrosterone 3-sulfate, 17-beta-glucuronosyl estradiol, and estrone 3-sulfate), as well as eicosanoids (prostaglandin E2, thromboxane B2, leukotriene C4, and leukotriene E4), and thyroid hormones (T4/L-thyroxine, and T3/3,3',5'-triiodo-L-thyronine). Can take up bilirubin glucuronides from plasma into the liver, contributing to the detoxification-enhancing liver-blood shuttling loop. Involved in the clearance of endogenous and exogenous substrates from the liver. Transports coproporphyrin I and III, by-products of heme synthesis, and may be involved in their hepatic disposition. May contribute to regulate the transport of organic compounds in testes across the blood-testis-barrier. Can transport HMG-CoA reductase inhibitors (also known as statins), such as pravastatin and pitavastatin, a clinically important class of hypolipidemic drugs. May play an important role in plasma and tissue distribution of the structurally diverse chemotherapeutic drug methotrexate. May also transport antihypertension agents, such as the angiotensin-converting enzyme (ACE) inhibitor prodrug enalapril, and the highly selective angiotensin II AT1-receptor antagonist valsartan, in the liver. Shows a pH-sensitive substrate specificity towards prostaglandin E2 and T4 which may be ascribed to the protonation state of the binding site and leads to a stimulation of substrate transport in an acidic microenvironment. Hydrogencarbonate/HCO3(-) acts as the probable counteranion that exchanges for organic anions. The protein is Solute carrier organic anion transporter family member 1B1 (SLCO1B1) of Homo sapiens (Human).